The chain runs to 177 residues: Ribosome maturation factor RimM (177 aa).

Residues 98 to 177 (GEEFYWRELY…RIEVDWDPGF (80 aa)) enclose the PRC barrel domain.

The protein belongs to the RimM family. As to quaternary structure, binds ribosomal protein uS19.

It is found in the cytoplasm. An accessory protein needed during the final step in the assembly of 30S ribosomal subunit, possibly for assembly of the head region. Essential for efficient processing of 16S rRNA. May be needed both before and after RbfA during the maturation of 16S rRNA. It has affinity for free ribosomal 30S subunits but not for 70S ribosomes. This chain is Ribosome maturation factor RimM, found in Photobacterium profundum (strain SS9).